Here is a 1551-residue protein sequence, read N- to C-terminus: Dual oxidase 1 (1551 aa).

Positions methionine 1–alanine 21 are cleaved as a signal peptide. At glutamine 22–glycine 596 the chain is on the extracellular side. Positions serine 26–phenylalanine 593 are peroxidase-like; mediates peroxidase activity. Asparagine 94 carries an N-linked (GlcNAc...) asparagine glycan. Positions leucine 197–alanine 222 are disordered. N-linked (GlcNAc...) asparagine glycosylation is found at asparagine 342, asparagine 354, asparagine 461, and asparagine 534. A helical membrane pass occupies residues valine 597 to alanine 617. Residues arginine 618–histidine 1044 lie on the Cytoplasmic side of the membrane. EF-hand domains follow at residues proline 815–glycine 850, serine 851–isoleucine 886, and glutamine 895–glutamate 930. Positions 828, 830, 832, 834, 839, 864, 866, 868, and 875 each coordinate Ca(2+). The tract at residues tyrosine 956 to arginine 1248 is interaction with TXNDC11. The chain crosses the membrane as a helical span at residues isoleucine 1045–tyrosine 1065. Residues tyrosine 1066–arginine 1080 lie on the Extracellular side of the membrane. Residues valine 1081–leucine 1101 traverse the membrane as a helical segment. Residues arginine 1087–serine 1269 enclose the Ferric oxidoreductase domain. At leucine 1102 to asparagine 1151 the chain is on the cytoplasmic side. Residues valine 1152 to histidine 1172 form a helical membrane-spanning segment. Residues asparagine 1173–glutamine 1188 are Extracellular-facing. Residues threonine 1189–alanine 1209 traverse the membrane as a helical segment. The Cytoplasmic segment spans residues serine 1210–histidine 1226. A helical transmembrane segment spans residues leucine 1227 to proline 1247. Position 1248 (arginine 1248) is a topological domain, extracellular. Residues phenylalanine 1249–serine 1269 form a helical membrane-spanning segment. In terms of domain architecture, FAD-binding FR-type spans arginine 1270 to glutamate 1376. Residues arginine 1270 to phenylalanine 1551 lie on the Cytoplasmic side of the membrane.

The protein in the N-terminal section; belongs to the peroxidase family. In terms of assembly, interacts with TPO and CYBA. Interacts with TXNDC11. In terms of processing, N-glycosylated. As to expression, expressed in thyrocytes (at protein level). Specifically expressed in thyroid.

It localises to the apical cell membrane. It carries out the reaction NADH + O2 + H(+) = H2O2 + NAD(+). The enzyme catalyses NADPH + O2 + H(+) = H2O2 + NADP(+). It functions in the pathway hormone biosynthesis; thyroid hormone biosynthesis. Peroxidase activity is inhibited by aminobenzohydrazide. The NADPH oxidase activity is calcium-dependent. Its function is as follows. Generates hydrogen peroxide which is required for the activity of thyroid peroxidase/TPO and lactoperoxidase/LPO. Plays a role in thyroid hormones synthesis and lactoperoxidase-mediated antimicrobial defense at the surface of mucosa. May have its own peroxidase activity through its N-terminal peroxidase-like domain. The polypeptide is Dual oxidase 1 (DUOX1) (Canis lupus familiaris (Dog)).